We begin with the raw amino-acid sequence, 416 residues long: 2,3-bisphosphoglycerate-independent phosphoglycerate mutase (416 aa).

Belongs to the BPG-independent phosphoglycerate mutase family. A-PGAM subfamily.

It catalyses the reaction (2R)-2-phosphoglycerate = (2R)-3-phosphoglycerate. It participates in carbohydrate degradation; glycolysis; pyruvate from D-glyceraldehyde 3-phosphate: step 3/5. In terms of biological role, catalyzes the interconversion of 2-phosphoglycerate and 3-phosphoglycerate. In Ignicoccus hospitalis (strain KIN4/I / DSM 18386 / JCM 14125), this protein is 2,3-bisphosphoglycerate-independent phosphoglycerate mutase.